The following is a 479-amino-acid chain: Probable periplasmic serine endoprotease DegP-like (479 aa).

Positions 1-27 (MSMPSLKKYAAALFAVFLMGQSVAAHA) are cleaved as a signal peptide. Active-site charge relay system residues include histidine 118, aspartate 148, and serine 221. Substrate contacts are provided by residues 219–221 (GNS) and 276–280 (LGVVI). PDZ domains lie at 265 to 356 (LKAS…VREG) and 362 to 468 (KVAV…LRQG). The disordered stretch occupies residues 368–390 (MPADDGDEATNDAAPSAERSSNR).

Belongs to the peptidase S1C family.

It localises to the periplasm. The enzyme catalyses Acts on substrates that are at least partially unfolded. The cleavage site P1 residue is normally between a pair of hydrophobic residues, such as Val-|-Val.. In terms of biological role, might be efficient in the degradation of transiently denatured and unfolded proteins which accumulate in the periplasm following stress conditions. This Pseudomonas fulva (strain 12-X) protein is Probable periplasmic serine endoprotease DegP-like.